Here is a 142-residue protein sequence, read N- to C-terminus: Large ribosomal subunit protein uL22c (142 aa).

Belongs to the universal ribosomal protein uL22 family. As to quaternary structure, part of the 50S ribosomal subunit.

It is found in the plastid. Its subcellular location is the chloroplast. This protein binds specifically to 23S rRNA. In terms of biological role, the globular domain of the protein is located near the polypeptide exit tunnel on the outside of the subunit, while an extended beta-hairpin is found that lines the wall of the exit tunnel in the center of the 70S ribosome. This Pinus thunbergii (Japanese black pine) protein is Large ribosomal subunit protein uL22c (rpl22).